The sequence spans 553 residues: Serine/threonine-protein phosphatase 2B catalytic subunit A1 (553 aa).

The residue at position 2 (serine 2) is an N-acetylserine. Residues aspartate 119, histidine 121, and aspartate 147 each coordinate Fe cation. Zn(2+) contacts are provided by aspartate 147 and asparagine 179. The active-site Proton donor is histidine 180. 2 residues coordinate Zn(2+): histidine 228 and histidine 317. The tract at residues 413-447 is disordered; it reads LDPESEPKAAEETVKARANATKETGTPSDEKASSA. A compositionally biased stretch (basic and acidic residues) spans 417-427; that stretch reads SEPKAAEETVK.

This sequence belongs to the PPP phosphatase family. PP-2B subfamily. Composed of two components (A and B), the A component is the catalytic subunit and the B component confers calcium sensitivity. It depends on Fe(3+) as a cofactor. The cofactor is Zn(2+).

The enzyme catalyses O-phospho-L-seryl-[protein] + H2O = L-seryl-[protein] + phosphate. The catalysed reaction is O-phospho-L-threonyl-[protein] + H2O = L-threonyl-[protein] + phosphate. Calcium-dependent, calmodulin-stimulated protein phosphatase. This subunit may have a role in the calmodulin activation of calcineurin. The chain is Serine/threonine-protein phosphatase 2B catalytic subunit A1 (CNA1) from Saccharomyces cerevisiae (strain ATCC 204508 / S288c) (Baker's yeast).